The sequence spans 431 residues: Glutamate-1-semialdehyde 2,1-aminomutase (431 aa).

Lys-269 is modified (N6-(pyridoxal phosphate)lysine).

Belongs to the class-III pyridoxal-phosphate-dependent aminotransferase family. HemL subfamily. Homodimer. Requires pyridoxal 5'-phosphate as cofactor.

The protein localises to the cytoplasm. It carries out the reaction (S)-4-amino-5-oxopentanoate = 5-aminolevulinate. The protein operates within porphyrin-containing compound metabolism; protoporphyrin-IX biosynthesis; 5-aminolevulinate from L-glutamyl-tRNA(Glu): step 2/2. It participates in porphyrin-containing compound metabolism; chlorophyll biosynthesis. The chain is Glutamate-1-semialdehyde 2,1-aminomutase from Chlorobium luteolum (strain DSM 273 / BCRC 81028 / 2530) (Pelodictyon luteolum).